A 134-amino-acid chain; its full sequence is Cytochrome b5 isoform B (134 aa).

The Cytochrome b5 heme-binding domain occupies 5–81 (AKIFTLSEVS…MEQYYVGEID (77 aa)). Residues His40 and His64 each contribute to the heme site. The helical transmembrane segment at 107-127 (FIIKLLQFLVPLAILGLAVGI) threads the bilayer.

This sequence belongs to the cytochrome b5 family. In terms of assembly, interacts with CER1, FAH1, FAH2 and BI-1.

Its subcellular location is the endoplasmic reticulum membrane. Membrane bound hemoprotein which function as an electron carrier for several membrane bound oxygenases, including fatty acid desaturases. In Arabidopsis thaliana (Mouse-ear cress), this protein is Cytochrome b5 isoform B.